The sequence spans 552 residues: MTELSIRPEEIRDALREYVDSFQATSAGREEVGRVVVTGDGIARVEGLPHTMTNELLEFSGGVLGLALNLEIGEIGTVILGEAEHIEEGQEVRRTGEILAVPVGDGFLGRVVDPLGRPIDGLGEIQAEGTRALELQAPTVVQRQPVKEPLQTGIKAIDAMTAIGRGQRQLIIGDRQTGKTTVAIDTIINQRDNWASGDPSKQVKCVYVAIGQKKSTIREVVNTLEEAGALAYTTVVAAPADEPAGFKYIAPYAGSAIAQHWMYNGQHALIVFDDLSKQAEAYRAISLLLRRPPGREAYPGDVFYLHSRLLERCAKLSDELGGGSLTGLPIIETKASDISAYIPTNVISITDGQIFLESDLFNQGVRPAINVGTSVSRVGGSAQTKAMKSVAGRLRLDLAQYRELEAFSAFGSDLDKASRDQLARGARLVELLKQPQNQPYPIERQVVSIWAGTTGKVDDVPVADVRRFESEFLDYVGRSHRGIYDAILGSGKLGDDVIQELNSAIAAFKNQFTLSDGKPLVNEAAASPLDPSAVRKESIPVHRAPARTDDEG.

Residue G173–T180 coordinates ATP. A disordered region spans residues A526–G552. Residues A533 to G552 are compositionally biased toward basic and acidic residues.

It belongs to the ATPase alpha/beta chains family. As to quaternary structure, F-type ATPases have 2 components, CF(1) - the catalytic core - and CF(0) - the membrane proton channel. CF(1) has five subunits: alpha(3), beta(3), gamma(1), delta(1), epsilon(1). CF(0) has three main subunits: a(1), b(2) and c(9-12). The alpha and beta chains form an alternating ring which encloses part of the gamma chain. CF(1) is attached to CF(0) by a central stalk formed by the gamma and epsilon chains, while a peripheral stalk is formed by the delta and b chains.

It localises to the cell membrane. It catalyses the reaction ATP + H2O + 4 H(+)(in) = ADP + phosphate + 5 H(+)(out). In terms of biological role, produces ATP from ADP in the presence of a proton gradient across the membrane. The alpha chain is a regulatory subunit. This Frankia alni (strain DSM 45986 / CECT 9034 / ACN14a) protein is ATP synthase subunit alpha.